Reading from the N-terminus, the 416-residue chain is UDP-N-acetylglucosamine 1-carboxyvinyltransferase (416 aa).

A phosphoenolpyruvate-binding site is contributed by 22–23; that stretch reads KN. A UDP-N-acetyl-alpha-D-glucosamine-binding site is contributed by arginine 92. Cysteine 116 acts as the Proton donor in catalysis. Cysteine 116 is modified (2-(S-cysteinyl)pyruvic acid O-phosphothioketal). UDP-N-acetyl-alpha-D-glucosamine contacts are provided by residues 121 to 125, aspartate 304, and isoleucine 326; that span reads RPVDQ.

The protein belongs to the EPSP synthase family. MurA subfamily.

Its subcellular location is the cytoplasm. The enzyme catalyses phosphoenolpyruvate + UDP-N-acetyl-alpha-D-glucosamine = UDP-N-acetyl-3-O-(1-carboxyvinyl)-alpha-D-glucosamine + phosphate. Its pathway is cell wall biogenesis; peptidoglycan biosynthesis. Functionally, cell wall formation. Adds enolpyruvyl to UDP-N-acetylglucosamine. This Aromatoleum aromaticum (strain DSM 19018 / LMG 30748 / EbN1) (Azoarcus sp. (strain EbN1)) protein is UDP-N-acetylglucosamine 1-carboxyvinyltransferase.